We begin with the raw amino-acid sequence, 136 residues long: Probable disulfide formation protein (136 aa).

A helical membrane pass occupies residues 7 to 26 (SYALYFAWAISCAGTLISIF). C36 and C39 form a disulfide bridge. A run of 2 helical transmembrane segments spans residues 41–60 (YQRI…AYRE) and 67–84 (YILP…YQVF). C96 and C101 are disulfide-bonded. Residues 109–131 (SYVTIPMASVVAFGAIVCLLVLT) form a helical membrane-spanning segment.

This sequence belongs to the DsbB family. BdbC subfamily.

The protein localises to the cell inner membrane. In terms of biological role, required for disulfide bond formation in some proteins. The polypeptide is Probable disulfide formation protein (Chlamydia pneumoniae (Chlamydophila pneumoniae)).